The following is a 338-amino-acid chain: mRNA decay activator protein ZFP36L1 (338 aa).

Residues 1–111 (MTTTLVSATI…QKQPGSGQVN (111 aa)) form a necessary and sufficient for the association with mRNA decay enzymes and mRNA decay activation region. Ser-54 bears the Phosphoserine; by MAPKAPK2 mark. The interval 71–113 (LKGEPAPSLSSRDSRFRDRSFSEGGERLLPTQKQPGSGQVNSS) is disordered. Positions 82–96 (RDSRFRDRSFSEGGE) are enriched in basic and acidic residues. The residue at position 90 (Ser-90) is a Phosphoserine; by PKB/AKT1. Ser-92 is subject to Phosphoserine; by PKB/AKT1 and MAPKAPK2. Residues 101 to 113 (TQKQPGSGQVNSS) show a composition bias toward polar residues. 2 consecutive C3H1-type zinc fingers follow at residues 114 to 142 (RYKT…HGIH) and 152 to 180 (KYKT…HNAE). Residues 185-338 (LAGGRDLSAD…IFSRLSISDD (154 aa)) are necessary for mRNA decay activation. At Ser-203 the chain carries Phosphoserine; by PKB/AKT1 and MAPKAPK2. The segment at 273–338 (SPTTFLFRPM…IFSRLSISDD (66 aa)) is disordered. Over residues 305 to 318 (YLSSSSSSHSGSDS) the composition is skewed to low complexity. Ser-318 is modified (phosphoserine). The residue at position 334 (Ser-334) is a Phosphoserine; by RPS6KA1.

Associates with the cytoplasmic CCR4-NOT deadenylase and RNA exosome complexes to trigger ARE-containing mRNA deadenylation and decay processes. Interacts with CNOT1. Interacts (via N-terminus) with CNOT6. Interacts with CNOT7; this interaction is inhibited in response to phorbol 12-myristate 13-acetate (PMA) treatment in a p38 MAPK-dependent manner. Interacts with DCP1A. Interacts (via N-terminus) with DCP2. Interacts (via N-terminus) with EXOSC2. Interacts with XRN1. Interacts (via phosphorylated form) with YWHAB; this interaction occurs in a protein kinase AKT1-dependent manner. Interacts (via phosphorylated form) with YWHAZ; this interaction occurs in a p38 MAPK- and AKT-signaling pathways. Phosphorylated. Phosphorylated by RPS6KA1 at Ser-334 upon phorbol 12-myristate 13-acetate (PMA) treatment; this phosphorylation results in dissociation of the CCR4-NOT deadenylase complex and induces p38 MAPK-mediated stabilization of the low-density lipoprotein receptor LDLR mRNA. Phosphorylated by protein kinase AKT1 at Ser-92 and Ser-203 in response to insulin; these phosphorylations stabilize ZFP36L1, increase the association with 14-3-3 proteins and mediate ARE-containing mRNA stabilization. AKT1-mediated phosphorylation at Ser-92 does not impair ARE-containing RNA-binding. Phosphorylated at Ser-54, Ser-92 and Ser-203 by MAPKAPK2; these phosphorylations increase the association with 14-3-3 proteins and mediate ARE-containing mRNA stabilization in a protein kinase AKT1-independent manner. MAPKAPK2-mediated phosphorylations at Ser-54, Ser-92 and Ser-203 do not impair ARE-containing RNA-binding. Phosphorylations increase the association with 14-3-3 proteins and mediate ARE-containing mRNA stabilization during early adipogenesis in a p38 MAPK- and AKT-dependent manner. In terms of processing, ubiquitinated. Ubiquitination leads to proteasomal degradation, a process inhibited by phosphorylations at Ser-90, Ser-92 and Ser-203. As to expression, expressed in preadipocytes and adipocytes. Expressed in the proximal and distal tubules in the renal cortex (at protein level). Expressed in ovary, heart, kidney, lung, spleen and thymus. Weakly expressed in brain, liver and testis. Expressed in osteoblasts. Expressed in embryonic stem cells (ESCs). Expressed through B lymphocyte development.

The protein resides in the nucleus. It localises to the cytoplasm. It is found in the cytoplasmic granule. Its subcellular location is the P-body. In terms of biological role, zinc-finger RNA-binding protein that destabilizes several cytoplasmic AU-rich element (ARE)-containing mRNA transcripts by promoting their poly(A) tail removal or deadenylation, and hence provide a mechanism for attenuating protein synthesis. Acts as a 3'-untranslated region (UTR) ARE mRNA-binding adapter protein to communicate signaling events to the mRNA decay machinery. Functions by recruiting the CCR4-NOT deadenylating complex and components of the cytoplasmic RNA decay machinery to the bound ARE-containing mRNAs, and hence promotes ARE-mediated mRNA deadenylation and decay processes. Also induces the degradation of ARE-containing mRNAs even in absence of poly(A) tail. Binds to 3'-UTR ARE of numerous mRNAs. Positively regulates early adipogenesis by promoting ARE-mediated mRNA decay of immediate early genes (IEGs). Promotes ARE-mediated mRNA decay of mineralocorticoid receptor NR3C2 mRNA in response to hypertonic stress. Negatively regulates hematopoietic/erythroid cell differentiation by promoting ARE-mediated mRNA decay of the transcription factor STAT5B mRNA. Positively regulates monocyte/macrophage cell differentiation by promoting ARE-mediated mRNA decay of the cyclin-dependent kinase CDK6 mRNA. Promotes degradation of ARE-containing pluripotency-associated mRNAs in embryonic stem cells (ESCs), such as NANOG, through a fibroblast growth factor (FGF)-induced MAPK-dependent signaling pathway, and hence attenuates ESC self-renewal and positively regulates mesendoderm differentiation. May play a role in mediating pro-apoptotic effects in malignant B-cells by promoting ARE-mediated mRNA decay of BCL2 mRNA. In association with ZFP36L2 maintains quiescence on developing B lymphocytes by promoting ARE-mediated decay of several mRNAs encoding cell cycle regulators that help B cells progress through the cell cycle, and hence ensuring accurate variable-diversity-joining (VDJ) recombination and functional immune cell formation. Together with ZFP36L2 is also necessary for thymocyte development and prevention of T-cell acute lymphoblastic leukemia (T-ALL) transformation by promoting ARE-mediated mRNA decay of the oncogenic transcription factor NOTCH1 mRNA. Involved in the delivery of target ARE-mRNAs to processing bodies (PBs). In addition to its cytosolic mRNA-decay function, plays a role in the regulation of nuclear mRNA 3'-end processing; modulates mRNA 3'-end maturation efficiency of the DLL4 mRNA through binding with an ARE embedded in a weak noncanonical polyadenylation (poly(A)) signal in endothelial cells. Also involved in the regulation of stress granule (SG) and P-body (PB) formation and fusion. Plays a role in vasculogenesis and endocardial development. Involved in the regulation of keratinocyte proliferation, differentiation and apoptosis. Plays a role in myoblast cell differentiation. This Mus musculus (Mouse) protein is mRNA decay activator protein ZFP36L1.